An 874-amino-acid polypeptide reads, in one-letter code: MKTSELRQKFLKFFETKGHTVVRSSSLVPHDDPTLLFTNAGMNQFKDVFLGFDKRPYSRATTAQKCVRAGGKHNDLENVGYTARHHTFFEMMGNFSFGDYFKRDAIHFAWEFLTSPEWLNIPKDKLLATVYAEDDEAYNIWLNEIGMPSERIVRIGDNKGAKYASDNFWQMGDTGPCGPCSEIFYDHGEEIWGGIPGSPEEDGDRWIEIWNCVFMQFNRDEQGNMNPLPKPSVDTGMGLERMAAVMQHVHSNYEIDLFQDLLKAVARETGAAFSMEEPSLKVIADHIRSCSFLIADGVLPSNEGRGYVLRRIIRRAVRHGYKLGQSKPFFHKLVADLVKEMGDAYPELKEKQVQIEEALKNEESRFAQTLETGMALLENALAKGSKKLDGEIIFKLYDTYGFPYDLTADICRERNIELDEAGFEREMEAQRARARAAQSFKANAQLPYDGQDTEFKGYSERQTESKVLALYKDGEQVDELNEGDSGAVVIDFTPFYAESGGQVGDVGYIFSGENRFEVRDTQKIKAAVFGQFGVQTSGRLKVGDSVTAKVDDEIRNANMRNHSATHLMHKALRDVLGRHVEQKGSLVTAESTRFDISHPQAVTAEEIAEVERRVNEAVLANVAVNAAIMSMEDAQKTGAMMLFGEKYGDEVRVLQMGGFSTELCGGTHVSRTGDIGLFKIISEGGIAAGVRRIEAITGLNALKWAQEQERLVKDIIAETKAQTEKDVLAKIQAGAAHAKALEKELARAKAELAVHAGAKLLDDAKDLGAAKLVAAQIEADAAALREIVTDLTGKSDNAVILLAAVNDGKVSLCAGVSKALTGKVKAGDLVKFAAEQVGGKGGGRPDLAQAGGTDAGKLPAVLDSVKDWVGAKLV.

Zn(2+) is bound by residues H562, H566, C664, and H668.

It belongs to the class-II aminoacyl-tRNA synthetase family. The cofactor is Zn(2+).

It is found in the cytoplasm. The enzyme catalyses tRNA(Ala) + L-alanine + ATP = L-alanyl-tRNA(Ala) + AMP + diphosphate. In terms of biological role, catalyzes the attachment of alanine to tRNA(Ala) in a two-step reaction: alanine is first activated by ATP to form Ala-AMP and then transferred to the acceptor end of tRNA(Ala). Also edits incorrectly charged Ser-tRNA(Ala) and Gly-tRNA(Ala) via its editing domain. The sequence is that of Alanine--tRNA ligase from Neisseria meningitidis serogroup C / serotype 2a (strain ATCC 700532 / DSM 15464 / FAM18).